Reading from the N-terminus, the 673-residue chain is Ribonucleoprotein PTB-binding 2 (673 aa).

Over residues 1 to 17 (MAARGGGAGGAGSGSGP) the composition is skewed to gly residues. The disordered stretch occupies residues 1 to 34 (MAARGGGAGGAGSGSGPSAGTAGEAAEPALRPGE). The segment covering 18-29 (SAGTAGEAAEPA) has biased composition (low complexity). RRM domains are found at residues 58 to 129 (RKIL…LQPT), 131 to 209 (ALLC…WMDV), and 220 to 298 (KCLC…FCAP). Positions 481-549 (QLPAGQAGPG…KGTEVASKNQ (69 aa)) are disordered. Residues 499–512 (SASVSISEASFSGS) show a composition bias toward low complexity. Residues 529-549 (TGNQKTPQSQPKGTEVASKNQ) show a composition bias toward polar residues.

Interacts with PTBP1 and RAVER1. As to expression, expressed throughout embryogenesis. Detected at low levels in adult lung, brain and kidney, but not in the other tissues tested.

The protein resides in the nucleus. It localises to the cytoplasm. Its function is as follows. May bind single-stranded nucleic acids. This chain is Ribonucleoprotein PTB-binding 2 (Raver2), found in Mus musculus (Mouse).